A 745-amino-acid polypeptide reads, in one-letter code: Phosphate transporter PHO1 homolog 4 (745 aa).

Residues 1-290 (MRFGKEFVSQ…KRNAAKLYME (290 aa)) enclose the SPX domain. Residues 1–342 (MRFGKEFVSQ…KINKERHLIT (342 aa)) are Cytoplasmic-facing. Residues 343–363 (FSTGFFFGCGISLIVALGLII) traverse the membrane as a helical segment. At 364–383 (HARNIMGTPGQRTYMETMFP) the chain is on the extracellular side. The helical transmembrane segment at 384–404 (LYRFFGFVVLHMDVYAANIYF) threads the bilayer. Over 405–427 (WRRYRVNYSFIFGFKQGTELGYR) the chain is Cytoplasmic. A helical membrane pass occupies residues 428 to 448 (HVLLLSFGLGTLSLCAVLLNL). Topologically, residues 449 to 464 (DMEMDAQTKDYRLVTE) are extracellular. The helical transmembrane segment at 465-485 (LIPLFLLVLVIIIVLCPFNIL) threads the bilayer. The Cytoplasmic portion of the chain corresponds to 486–615 (YRSSRFFFLS…YTLNRGSNWN (130 aa)). The region spanning 550–744 (TSNIGFRTFY…NYEEDGDHHN (195 aa)) is the EXS domain. The chain crosses the membrane as a helical span at residues 616–636 (ITAWVFSGVATFYGTYWDIVL). Over 637-660 (DWGLLQRGCKNSFLRDKLLVPHKT) the chain is Extracellular. A helical membrane pass occupies residues 661–681 (VYYAAMVLNVLLRLVWLQTVL). Residues 682-745 (DLKFSFLHRE…YEEDGDHHNN (64 aa)) are Cytoplasmic-facing.

The protein belongs to the SYG1 (TC 2.A.94) family. In terms of tissue distribution, expressed in root epidermis and cortex, leaf hydathodes, pollen grains and stigma apex.

Its subcellular location is the cell membrane. May transport inorganic phosphate (Pi). The protein is Phosphate transporter PHO1 homolog 4 (PHO1-H4) of Arabidopsis thaliana (Mouse-ear cress).